Reading from the N-terminus, the 466-residue chain is Argininosuccinate lyase (466 aa).

This sequence belongs to the lyase 1 family. Argininosuccinate lyase subfamily.

The protein resides in the cytoplasm. It catalyses the reaction 2-(N(omega)-L-arginino)succinate = fumarate + L-arginine. It participates in amino-acid biosynthesis; L-arginine biosynthesis; L-arginine from L-ornithine and carbamoyl phosphate: step 3/3. This Desulfovibrio desulfuricans (strain ATCC 27774 / DSM 6949 / MB) protein is Argininosuccinate lyase.